Here is a 134-residue protein sequence, read N- to C-terminus: Small ribosomal subunit protein uS12 (134 aa).

A disordered region spans residues 1 to 26 (MPTIQQLVRKGRESFADKSKSPALNS). The span at 10–20 (KGRESFADKSK) shows a compositional bias: basic and acidic residues. 3-methylthioaspartic acid is present on Asp89. The tract at residues 103–134 (DTAGVNGRTQRRSKYGAKRPKPGQAPAAKGKK) is disordered. Residues 111 to 123 (TQRRSKYGAKRPK) are compositionally biased toward basic residues. Residues 124–134 (PGQAPAAKGKK) are compositionally biased toward low complexity.

The protein belongs to the universal ribosomal protein uS12 family. Part of the 30S ribosomal subunit. Contacts proteins S8 and S17. May interact with IF1 in the 30S initiation complex.

Functionally, with S4 and S5 plays an important role in translational accuracy. Interacts with and stabilizes bases of the 16S rRNA that are involved in tRNA selection in the A site and with the mRNA backbone. Located at the interface of the 30S and 50S subunits, it traverses the body of the 30S subunit contacting proteins on the other side and probably holding the rRNA structure together. The combined cluster of proteins S8, S12 and S17 appears to hold together the shoulder and platform of the 30S subunit. This Porphyromonas gingivalis (strain ATCC BAA-308 / W83) protein is Small ribosomal subunit protein uS12.